A 64-amino-acid chain; its full sequence is Large ribosomal subunit protein bL35 (64 aa).

Belongs to the bacterial ribosomal protein bL35 family.

The protein is Large ribosomal subunit protein bL35 of Pseudomonas entomophila (strain L48).